The following is a 153-amino-acid chain: Large ribosomal subunit protein bL9 (153 aa).

Belongs to the bacterial ribosomal protein bL9 family.

Binds to the 23S rRNA. This chain is Large ribosomal subunit protein bL9, found in Blochmanniella pennsylvanica (strain BPEN).